A 408-amino-acid chain; its full sequence is Probable medium-chain specific acyl-CoA dehydrogenase 2, mitochondrial (408 aa).

A mitochondrion-targeting transit peptide spans 1–5 (MLSRL). FAD-binding positions include 143–152 (YCVTEPGAGS) and 176–178 (WIT). Position 152 (Ser152) interacts with substrate. Substrate is bound at residue 263–266 (DMTR). FAD contacts are provided by residues 291–293 (RKA), 301–302 (HQ), and 355–359 (MLFRC). Glu382 functions as the Proton acceptor in the catalytic mechanism. Gly383 lines the substrate pocket. An FAD-binding site is contributed by 384 to 386 (TSQ). Position 394 (Arg394) interacts with substrate.

This sequence belongs to the acyl-CoA dehydrogenase family. In terms of assembly, homotetramer. The cofactor is FAD.

It is found in the mitochondrion matrix. The catalysed reaction is a medium-chain 2,3-saturated fatty acyl-CoA + oxidized [electron-transfer flavoprotein] + H(+) = a medium-chain (2E)-enoyl-CoA + reduced [electron-transfer flavoprotein]. Its pathway is lipid metabolism; mitochondrial fatty acid beta-oxidation. Functionally, this enzyme is specific for acyl chain lengths of 4 to 16. The chain is Probable medium-chain specific acyl-CoA dehydrogenase 2, mitochondrial from Caenorhabditis briggsae.